A 154-amino-acid polypeptide reads, in one-letter code: Interleukin-2 (154 aa).

Residues 1–20 form the signal peptide; that stretch reads MYKLQFLSCIALTLALVANS. A glycan (O-linked (GalNAc...) threonine) is linked at T23. A disulfide bond links C78 and C126. N-linked (GlcNAc...) asparagine glycosylation occurs at N111.

It belongs to the IL-2 family.

Its subcellular location is the secreted. Its function is as follows. Cytokine produced by activated CD4-positive helper T-cells and to a lesser extend activated CD8-positive T-cells and natural killer (NK) cells that plays pivotal roles in the immune response and tolerance. Binds to a receptor complex composed of either the high-affinity trimeric IL-2R (IL2RA/CD25, IL2RB/CD122 and IL2RG/CD132) or the low-affinity dimeric IL-2R (IL2RB and IL2RG). Interaction with the receptor leads to oligomerization and conformation changes in the IL-2R subunits resulting in downstream signaling starting with phosphorylation of JAK1 and JAK3. In turn, JAK1 and JAK3 phosphorylate the receptor to form a docking site leading to the phosphorylation of several substrates including STAT5. This process leads to activation of several pathways including STAT, phosphoinositide-3-kinase/PI3K and mitogen-activated protein kinase/MAPK pathways. Functions as a T-cell growth factor and can increase NK-cell cytolytic activity as well. Promotes strong proliferation of activated B-cells and subsequently immunoglobulin production. Plays a pivotal role in regulating the adaptive immune system by controlling the survival and proliferation of regulatory T-cells, which are required for the maintenance of immune tolerance. Moreover, participates in the differentiation and homeostasis of effector T-cell subsets, including Th1, Th2, Th17 as well as memory CD8-positive T-cells. The sequence is that of Interleukin-2 (IL2) from Camelus bactrianus (Bactrian camel).